Reading from the N-terminus, the 336-residue chain is 4-aminobenzoate N-oxygenase (336 aa).

Tyrosine 93 serves as a coordination point for 4-nitrobenzoate. Glutamate 101, glutamate 136, histidine 139, and glutamate 196 together coordinate Fe cation. 4-nitrobenzoate is bound at residue asparagine 200. Positions 223, 227, and 230 each coordinate Fe cation.

It belongs to the AurF N-oxygenase family. In terms of assembly, homodimer. The cofactor is Fe(2+).

It catalyses the reaction 4-aminobenzoate + AH2 + 2 O2 = 4-nitrobenzoate + A + 2 H2O. The protein operates within antibiotic biosynthesis. Functionally, involved in the biosynthesis of the polyketide antibiotic aureothin. Catalyzes the oxidation of p-aminobenzoate (pABA) to p-nitrobenzoate (pNBA), an unusual polyketide synthase starter unit. Reaction mechanism involves the generation of a peroxodiiron(III/III) intermediate, which effects the initial oxidation of p-aminobenzoate to p-hydroxylaminobenzoate (Ar-NHOH). Ar-NHOH is then probably directly converted to the fully oxidized p-nitrobenzoate via a four-electron N-oxidation, bypassing the formation of a nitroso compound. In Streptomyces thioluteus, this protein is 4-aminobenzoate N-oxygenase.